Reading from the N-terminus, the 151-residue chain is Protein SprT-like (151 aa).

One can recognise a SprT-like domain in the interval 6–148 (LQALVERISL…FCRGKLKKIK (143 aa)). Residue histidine 67 coordinates Zn(2+). The active site involves glutamate 68. Residue histidine 71 coordinates Zn(2+).

The protein belongs to the SprT family. Zn(2+) is required as a cofactor.

It is found in the cytoplasm. The sequence is that of Protein SprT-like from Anoxybacillus flavithermus (strain DSM 21510 / WK1).